We begin with the raw amino-acid sequence, 340 residues long: Polyporopepsin (340 aa).

In terms of domain architecture, Peptidase A1 spans Tyr-14–Ala-330. Residue Asp-32 is part of the active site. N-linked (GlcNAc...) asparagine glycosylation occurs at Asn-192. The active site involves Asp-212. An N-linked (GlcNAc...) asparagine glycan is attached at Asn-238.

This sequence belongs to the peptidase A1 family.

The enzyme catalyses Milk clotting activity, broad specificity, but fails to cleave 15-Leu-|-Tyr-16 or 16-Tyr-|-Leu-17 of insulin B chain.. This is Polyporopepsin from Irpex lacteus (Milk-white toothed polypore).